Here is a 298-residue protein sequence, read N- to C-terminus: Lipoyl synthase (298 aa).

[4Fe-4S] cluster contacts are provided by cysteine 40, cysteine 45, cysteine 51, cysteine 67, cysteine 71, cysteine 74, and serine 280. Positions 53-269 constitute a Radical SAM core domain; sequence AVRRTATFMI…KEIALSKGFT (217 aa).

This sequence belongs to the radical SAM superfamily. Lipoyl synthase family. Requires [4Fe-4S] cluster as cofactor.

The protein localises to the cytoplasm. The enzyme catalyses [[Fe-S] cluster scaffold protein carrying a second [4Fe-4S](2+) cluster] + N(6)-octanoyl-L-lysyl-[protein] + 2 oxidized [2Fe-2S]-[ferredoxin] + 2 S-adenosyl-L-methionine + 4 H(+) = [[Fe-S] cluster scaffold protein] + N(6)-[(R)-dihydrolipoyl]-L-lysyl-[protein] + 4 Fe(3+) + 2 hydrogen sulfide + 2 5'-deoxyadenosine + 2 L-methionine + 2 reduced [2Fe-2S]-[ferredoxin]. The protein operates within protein modification; protein lipoylation via endogenous pathway; protein N(6)-(lipoyl)lysine from octanoyl-[acyl-carrier-protein]. Its function is as follows. Catalyzes the radical-mediated insertion of two sulfur atoms into the C-6 and C-8 positions of the octanoyl moiety bound to the lipoyl domains of lipoate-dependent enzymes, thereby converting the octanoylated domains into lipoylated derivatives. The polypeptide is Lipoyl synthase (Geobacillus sp. (strain WCH70)).